A 173-amino-acid chain; its full sequence is MKKKEIVDDVTMKRAITRITYEIIERNKSLDNLVLAGIKTRGVYLARRIQERLKQLEGIELPIGELDIKPFRDDMKVEEDTTDMPFDINGKDVILVDDVLYTGRTIRAAIDNLVSLGRPARVGLAVLVDRGHRELPIRADYVGKNIPTSSIEEIVVEVIEVDGKDCVSIVDPS.

The PRPP-binding motif lies at 93–105 (VILVDDVLYTGRT).

Belongs to the purine/pyrimidine phosphoribosyltransferase family. PyrR subfamily. Homodimer and homohexamer; in equilibrium.

It carries out the reaction UMP + diphosphate = 5-phospho-alpha-D-ribose 1-diphosphate + uracil. In terms of biological role, regulates transcriptional attenuation of the pyrimidine nucleotide (pyr) operon by binding in a uridine-dependent manner to specific sites on pyr mRNA. This disrupts an antiterminator hairpin in the RNA and favors formation of a downstream transcription terminator, leading to a reduced expression of downstream genes. Its function is as follows. Also displays a weak uracil phosphoribosyltransferase activity which is not physiologically significant. This Streptococcus uberis (strain ATCC BAA-854 / 0140J) protein is Bifunctional protein PyrR.